Reading from the N-terminus, the 685-residue chain is Protein snwA (685 aa).

4 disordered regions span residues 1 to 62 (MTSL…GYLP), 88 to 112 (RKGK…TSIV), 347 to 573 (LAED…DSIY), and 605 to 685 (AVSN…SKKR). 2 stretches are compositionally biased toward low complexity: residues 30 to 41 (PQQQKQQQQQQQ) and 93 to 102 (KSSNSNTSNM). The interval 194–360 (ATYIKYTPSN…VRNERSGIIQ (167 aa)) is SNW. The span at 370–381 (DSDNDNDNDSSS) shows a compositional bias: acidic residues. Residues 399–494 (RSTERIPSRN…DRYSKRRSDS (96 aa)) show a composition bias toward basic and acidic residues. Over residues 495–507 (DSDSDSDSSDSED) the composition is skewed to acidic residues. Basic and acidic residues predominate over residues 508–556 (ERVRRERKEKLERDKIRMEKKRELEREYRLEASGKKSKFNRDQDRDISE). Polar residues predominate over residues 618-631 (EDNTSIQDVLSNSR). Residues 646-685 (PNKEFSGTDRSKDRTGPVAFEKEKKKSDDPFGFDDFSKKR) show a composition bias toward basic and acidic residues.

The protein belongs to the SNW family. In terms of assembly, interacts with cypE.

Its subcellular location is the nucleus. The chain is Protein snwA (snwA) from Dictyostelium discoideum (Social amoeba).